The sequence spans 133 residues: S-adenosylmethionine decarboxylase proenzyme (133 aa).

S64 acts as the Schiff-base intermediate with substrate; via pyruvic acid in catalysis. S64 is subject to Pyruvic acid (Ser); by autocatalysis. The active-site Proton acceptor; for processing activity is the H69. C84 serves as the catalytic Proton donor; for catalytic activity.

The protein belongs to the prokaryotic AdoMetDC family. Type 1 subfamily. As to quaternary structure, heterotetramer of two alpha and two beta chains arranged as a dimer of alpha/beta heterodimers. Requires pyruvate as cofactor. In terms of processing, is synthesized initially as an inactive proenzyme. Formation of the active enzyme involves a self-maturation process in which the active site pyruvoyl group is generated from an internal serine residue via an autocatalytic post-translational modification. Two non-identical subunits are generated from the proenzyme in this reaction, and the pyruvate is formed at the N-terminus of the alpha chain, which is derived from the carboxyl end of the proenzyme. The post-translation cleavage follows an unusual pathway, termed non-hydrolytic serinolysis, in which the side chain hydroxyl group of the serine supplies its oxygen atom to form the C-terminus of the beta chain, while the remainder of the serine residue undergoes an oxidative deamination to produce ammonia and the pyruvoyl group blocking the N-terminus of the alpha chain.

The enzyme catalyses S-adenosyl-L-methionine + H(+) = S-adenosyl 3-(methylsulfanyl)propylamine + CO2. It participates in amine and polyamine biosynthesis; S-adenosylmethioninamine biosynthesis; S-adenosylmethioninamine from S-adenosyl-L-methionine: step 1/1. Catalyzes the decarboxylation of S-adenosylmethionine to S-adenosylmethioninamine (dcAdoMet), the propylamine donor required for the synthesis of the polyamines spermine and spermidine from the diamine putrescine. This is S-adenosylmethionine decarboxylase proenzyme from Persephonella marina (strain DSM 14350 / EX-H1).